A 144-amino-acid polypeptide reads, in one-letter code: MANILVINGPNLNMLGKREPEHYGRQTLGDIIEELETLADDYEVRLYNFQSNAEHEIVERIQTAIDDIDFIIINPAAFTHTSVAIRDALSTVKIPFIEVHLSNIHKREAFRTHSYFSDLAEGVIAGLGPIGYQLALAAAVEKLK.

Residue Tyr-23 is the Proton acceptor of the active site. Residues Asn-74, His-80, and Asp-87 each contribute to the substrate site. The active-site Proton donor is His-100. Residues 101–102 (LS) and Arg-111 each bind substrate.

The protein belongs to the type-II 3-dehydroquinase family. As to quaternary structure, homododecamer.

It carries out the reaction 3-dehydroquinate = 3-dehydroshikimate + H2O. It functions in the pathway metabolic intermediate biosynthesis; chorismate biosynthesis; chorismate from D-erythrose 4-phosphate and phosphoenolpyruvate: step 3/7. In terms of biological role, catalyzes a trans-dehydration via an enolate intermediate. This Hydrogenovibrio crunogenus (strain DSM 25203 / XCL-2) (Thiomicrospira crunogena) protein is 3-dehydroquinate dehydratase.